We begin with the raw amino-acid sequence, 317 residues long: Putative HTH-type transcriptional regulatory protein TGAM_1316 (317 aa).

The 59-residue stretch at 131 to 189 (LKKLREKHGYSVGELASLLGVSRKSLLNYERNEQAVSLEVALRMEELFDEPIAEPIDVL) folds into the HTH cro/C1-type domain. The segment at residues 142–161 (VGELASLLGVSRKSLLNYER) is a DNA-binding region (H-T-H motif).

This chain is Putative HTH-type transcriptional regulatory protein TGAM_1316, found in Thermococcus gammatolerans (strain DSM 15229 / JCM 11827 / EJ3).